The chain runs to 580 residues: Kelch-like protein 38 (580 aa).

The 68-residue stretch at 34–101 folds into the BTB domain; the sequence is TDVSICSGAC…VYTGEVHISA (68 aa). The BACK domain occupies 136–237; sequence CLGLVRLAEI…HPAFFHHFIA (102 aa). Kelch repeat units follow at residues 284–331, 333–382, 383–430, 432–478, 479–520, and 522–572; these read FLLL…TLHR, VYVL…THRN, FIFS…VKDQ, LYLF…VLGE, KIII…VMGN, and LYVT…TLQC.

The sequence is that of Kelch-like protein 38 (Klhl38) from Rattus norvegicus (Rat).